The following is a 413-amino-acid chain: NADPH dehydrogenase afvA (413 aa).

Residue 53-56 (APLC) participates in FMN binding. Residue Tyr58 participates in substrate binding. Residues Ala88 and Gln130 each coordinate FMN. 211 to 214 (HAAH) lines the substrate pocket. FMN-binding positions include Arg264 and 370–371 (GR).

It belongs to the NADH:flavin oxidoreductase/NADH oxidase family. NamA subfamily. It depends on FMN as a cofactor.

The enzyme catalyses A + NADPH + H(+) = AH2 + NADP(+). The protein operates within secondary metabolite biosynthesis. In terms of biological role, NADPH dehydrogenase; part of the gene cluster that mediates the biosynthesis of aflavarin, a bicoumarin that exhibits anti-insectan activity against the fungivorous beetle C.hemipterus. The sequence is that of NADPH dehydrogenase afvA from Aspergillus flavus (strain ATCC 200026 / FGSC A1120 / IAM 13836 / NRRL 3357 / JCM 12722 / SRRC 167).